Reading from the N-terminus, the 106-residue chain is Protein translation factor SUI1 homolog (106 aa).

Belongs to the SUI1 family.

In Methanopyrus kandleri (strain AV19 / DSM 6324 / JCM 9639 / NBRC 100938), this protein is Protein translation factor SUI1 homolog.